Reading from the N-terminus, the 389-residue chain is S-adenosylmethionine synthase (389 aa).

An ATP-binding site is contributed by His17. Asp19 contacts Mg(2+). Residue Glu45 coordinates K(+). L-methionine-binding residues include Glu58 and Gln101. Residues 101–111 (QSPDIAQGVNP) are flexible loop. Residues 168–170 (DGK), 234–235 (RF), Asp243, 249–250 (RK), and Lys270 contribute to the ATP site. Position 243 (Asp243) interacts with L-methionine. L-methionine is bound at residue Lys274.

It belongs to the AdoMet synthase family. As to quaternary structure, homotetramer; dimer of dimers. The cofactor is Mg(2+). It depends on K(+) as a cofactor.

The protein resides in the cytoplasm. The enzyme catalyses L-methionine + ATP + H2O = S-adenosyl-L-methionine + phosphate + diphosphate. Its pathway is amino-acid biosynthesis; S-adenosyl-L-methionine biosynthesis; S-adenosyl-L-methionine from L-methionine: step 1/1. Catalyzes the formation of S-adenosylmethionine (AdoMet) from methionine and ATP. The overall synthetic reaction is composed of two sequential steps, AdoMet formation and the subsequent tripolyphosphate hydrolysis which occurs prior to release of AdoMet from the enzyme. In Syntrophobacter fumaroxidans (strain DSM 10017 / MPOB), this protein is S-adenosylmethionine synthase.